Here is a 388-residue protein sequence, read N- to C-terminus: Succinate--CoA ligase [ADP-forming] subunit beta (388 aa).

The 236-residue stretch at 9–244 (KQLFAEFGLP…PSQEDKREAH (236 aa)) folds into the ATP-grasp domain. ATP is bound by residues Lys46, 53 to 55 (GRG), Glu99, Ser102, and Glu107. Residues Asn199 and Asp213 each coordinate Mg(2+). Substrate contacts are provided by residues Asn264 and 321 to 323 (GIV).

Belongs to the succinate/malate CoA ligase beta subunit family. In terms of assembly, heterotetramer of two alpha and two beta subunits. The cofactor is Mg(2+).

The enzyme catalyses succinate + ATP + CoA = succinyl-CoA + ADP + phosphate. It carries out the reaction GTP + succinate + CoA = succinyl-CoA + GDP + phosphate. Its pathway is carbohydrate metabolism; tricarboxylic acid cycle; succinate from succinyl-CoA (ligase route): step 1/1. Functionally, succinyl-CoA synthetase functions in the citric acid cycle (TCA), coupling the hydrolysis of succinyl-CoA to the synthesis of either ATP or GTP and thus represents the only step of substrate-level phosphorylation in the TCA. The beta subunit provides nucleotide specificity of the enzyme and binds the substrate succinate, while the binding sites for coenzyme A and phosphate are found in the alpha subunit. The chain is Succinate--CoA ligase [ADP-forming] subunit beta from Vibrio vulnificus (strain CMCP6).